Consider the following 568-residue polypeptide: Putative F-box protein At5g39480 (568 aa).

In terms of domain architecture, F-box spans 9-55 (ACLLLTLPEDVFAVISRFLSPSDICNLILCGKSLPALVDTEKMWLVQ). The segment at 315 to 337 (TNVLGESSSSKNTTPSQSEIRVS) is disordered. A compositionally biased stretch (low complexity) spans 321-332 (SSSSKNTTPSQS).

The protein is Putative F-box protein At5g39480 of Arabidopsis thaliana (Mouse-ear cress).